The chain runs to 112 residues: DNA-binding protein TON_1102 (112 aa).

Belongs to the PDCD5 family.

This chain is DNA-binding protein TON_1102, found in Thermococcus onnurineus (strain NA1).